The chain runs to 202 residues: FMN-dependent NADH:quinone oxidoreductase (202 aa).

FMN is bound by residues serine 10, 16 to 18 (SHS), and 96 to 99 (MYNF).

This sequence belongs to the azoreductase type 1 family. As to quaternary structure, homodimer. Requires FMN as cofactor.

It catalyses the reaction 2 a quinone + NADH + H(+) = 2 a 1,4-benzosemiquinone + NAD(+). The catalysed reaction is N,N-dimethyl-1,4-phenylenediamine + anthranilate + 2 NAD(+) = 2-(4-dimethylaminophenyl)diazenylbenzoate + 2 NADH + 2 H(+). Its function is as follows. Quinone reductase that provides resistance to thiol-specific stress caused by electrophilic quinones. In terms of biological role, also exhibits azoreductase activity. Catalyzes the reductive cleavage of the azo bond in aromatic azo compounds to the corresponding amines. This Hydrogenovibrio crunogenus (strain DSM 25203 / XCL-2) (Thiomicrospira crunogena) protein is FMN-dependent NADH:quinone oxidoreductase.